A 254-amino-acid chain; its full sequence is Urease accessory protein UreF (254 aa).

Residues 1-11 (MDKGKSVKSTE) show a composition bias toward basic and acidic residues. The interval 1-26 (MDKGKSVKSTEKSVGMPPKTPKTDNN) is disordered.

This sequence belongs to the UreF family. UreH, UreF and UreG form a complex that acts as a GTP-hydrolysis-dependent molecular chaperone, activating the urease apoprotein by helping to assemble the nickel containing metallocenter of UreC. The UreE protein probably delivers the nickel.

The protein localises to the cytoplasm. Required for maturation of urease via the functional incorporation of the urease nickel metallocenter. This is Urease accessory protein UreF from Helicobacter pylori (strain ATCC 700392 / 26695) (Campylobacter pylori).